The primary structure comprises 349 residues: tRNA N6-adenosine threonylcarbamoyltransferase (349 aa).

His115 and His119 together coordinate Fe cation. Residues Leu137–Gly141, Asp170, Gly183, and Asn281 each bind substrate. Asp309 provides a ligand contact to Fe cation.

It belongs to the KAE1 / TsaD family. The cofactor is Fe(2+).

The protein localises to the cytoplasm. The catalysed reaction is L-threonylcarbamoyladenylate + adenosine(37) in tRNA = N(6)-L-threonylcarbamoyladenosine(37) in tRNA + AMP + H(+). In terms of biological role, required for the formation of a threonylcarbamoyl group on adenosine at position 37 (t(6)A37) in tRNAs that read codons beginning with adenine. Is involved in the transfer of the threonylcarbamoyl moiety of threonylcarbamoyl-AMP (TC-AMP) to the N6 group of A37, together with TsaE and TsaB. TsaD likely plays a direct catalytic role in this reaction. The chain is tRNA N6-adenosine threonylcarbamoyltransferase from Methylobacterium nodulans (strain LMG 21967 / CNCM I-2342 / ORS 2060).